A 210-amino-acid polypeptide reads, in one-letter code: Large ribosomal subunit protein uL3 (210 aa).

It belongs to the universal ribosomal protein uL3 family. Part of the 50S ribosomal subunit. Forms a cluster with proteins L14 and L19.

Its function is as follows. One of the primary rRNA binding proteins, it binds directly near the 3'-end of the 23S rRNA, where it nucleates assembly of the 50S subunit. The protein is Large ribosomal subunit protein uL3 of Caldicellulosiruptor saccharolyticus (strain ATCC 43494 / DSM 8903 / Tp8T 6331).